A 296-amino-acid polypeptide reads, in one-letter code: Aspartate carbamoyltransferase catalytic subunit (296 aa).

Positions 50 and 51 each coordinate carbamoyl phosphate. K79 is a binding site for L-aspartate. R100, H128, and Q131 together coordinate carbamoyl phosphate. L-aspartate is bound by residues R161 and R219. Residues L258 and P259 each coordinate carbamoyl phosphate.

Belongs to the aspartate/ornithine carbamoyltransferase superfamily. ATCase family. Heterooligomer of catalytic and regulatory chains.

The catalysed reaction is carbamoyl phosphate + L-aspartate = N-carbamoyl-L-aspartate + phosphate + H(+). Its pathway is pyrimidine metabolism; UMP biosynthesis via de novo pathway; (S)-dihydroorotate from bicarbonate: step 2/3. Its function is as follows. Catalyzes the condensation of carbamoyl phosphate and aspartate to form carbamoyl aspartate and inorganic phosphate, the committed step in the de novo pyrimidine nucleotide biosynthesis pathway. In Korarchaeum cryptofilum (strain OPF8), this protein is Aspartate carbamoyltransferase catalytic subunit.